The sequence spans 147 residues: D-aminoacyl-tRNA deacylase (147 aa).

Positions 136-137 (GP) match the Gly-cisPro motif, important for rejection of L-amino acids motif.

The protein belongs to the DTD family. In terms of assembly, homodimer.

The protein localises to the cytoplasm. The enzyme catalyses glycyl-tRNA(Ala) + H2O = tRNA(Ala) + glycine + H(+). The catalysed reaction is a D-aminoacyl-tRNA + H2O = a tRNA + a D-alpha-amino acid + H(+). In terms of biological role, an aminoacyl-tRNA editing enzyme that deacylates mischarged D-aminoacyl-tRNAs. Also deacylates mischarged glycyl-tRNA(Ala), protecting cells against glycine mischarging by AlaRS. Acts via tRNA-based rather than protein-based catalysis; rejects L-amino acids rather than detecting D-amino acids in the active site. By recycling D-aminoacyl-tRNA to D-amino acids and free tRNA molecules, this enzyme counteracts the toxicity associated with the formation of D-aminoacyl-tRNA entities in vivo and helps enforce protein L-homochirality. This chain is D-aminoacyl-tRNA deacylase, found in Sulfurihydrogenibium sp. (strain YO3AOP1).